A 66-amino-acid polypeptide reads, in one-letter code: Clusterin (66 aa).

The protein belongs to the clusterin family. Antiparallel disulfide-linked heterodimer of an alpha chain and a beta chain. Self-associates and forms higher oligomers. Interacts with a broad range of misfolded proteins, including APP, APOC2 and LYZ. Slightly acidic pH promotes interaction with misfolded proteins. Forms high-molecular weight oligomers upon interaction with misfolded proteins. Interacts with APOA1, LRP2, CLUAP1 and PON1. Interacts with the complement membrane attack complex. Interacts (via alpha chain) with XRCC6. Interacts with SYVN1, COMMD1, BTRC, CUL1 and with ubiquitin and SCF (SKP1-CUL1-F-box protein) E3 ubiquitin-protein ligase complexes. Interacts (via alpha chain) with BAX in stressed cells, where BAX undergoes a conformation change leading to association with the mitochondrial membrane. Does not interact with BAX in unstressed cells. Found in a complex with LTF, CLU, EPPIN and SEMG1. Interacts (immaturely glycosylated pre-secreted form) with HSPA5; this interaction promotes CLU stability and facilitates stress-induced CLU retrotranslocation from the secretory pathway to the mitochondria, thereby reducing stress-induced apoptosis by stabilizing mitochondrial membrane integrity. Interacts with BCL2L1; this interaction releases and activates BAX and promotes cell death. Interacts with TGFBR2 and ACVR1. Interacts (secreted form) with STMN3; this interaction may act as an important modulator during neuronal differentiation. Component of a epididymal complex at least composed of soluble form of prion protein PRNP, CLU, BPI, CES5A, MANBA and GLB1. Proteolytically cleaved on its way through the secretory system, probably within the Golgi lumen. Proteolytic cleavage is not necessary for its chaperone activity. All non-secreted forms are not proteolytically cleaved. Chaperone activity of uncleaved forms is dependent on a non-reducing environment. Post-translationally, polyubiquitinated, leading to proteasomal degradation. Under cellular stress, the intracellular level of cleaved form is reduced due to proteasomal degradation. In terms of processing, heavily N-glycosylated. About 30% of the protein mass is comprised of complex N-linked carbohydrate. Endoplasmic reticulum (ER) stress induces changes in glycosylation status and increases level of hypoglycosylated forms. Core carbohydrates are essential for chaperone activity. Non-secreted forms are hypoglycosylated or unglycosylated.

The protein resides in the secreted. Its subcellular location is the nucleus. It localises to the cytoplasm. The protein localises to the mitochondrion membrane. It is found in the cytosol. The protein resides in the microsome. Its subcellular location is the endoplasmic reticulum. It localises to the mitochondrion. The protein localises to the perinuclear region. It is found in the cytoplasmic vesicle. The protein resides in the secretory vesicle. Its subcellular location is the chromaffin granule. Functions as extracellular chaperone that prevents aggregation of non native proteins. Prevents stress-induced aggregation of blood plasma proteins. Inhibits formation of amyloid fibrils by APP, APOC2, B2M, CALCA, CSN3, SNCA and aggregation-prone LYZ variants (in vitro). Does not require ATP. Maintains partially unfolded proteins in a state appropriate for subsequent refolding by other chaperones, such as HSPA8/HSC70. Does not refold proteins by itself. Binding to cell surface receptors triggers internalization of the chaperone-client complex and subsequent lysosomal or proteasomal degradation. When secreted, protects cells against apoptosis and against cytolysis by complement: inhibits assembly of the complement membrane attack complex (MAC) by preventing polymerization of C9 pore component of the MAC complex. Intracellular forms interact with ubiquitin and SCF (SKP1-CUL1-F-box protein) E3 ubiquitin-protein ligase complexes and promote the ubiquitination and subsequent proteasomal degradation of target proteins. Promotes proteasomal degradation of COMMD1 and IKBKB. Modulates NF-kappa-B transcriptional activity. Following stress, promotes apoptosis. Inhibits apoptosis when associated with the mitochondrial membrane by interference with BAX-dependent release of cytochrome c into the cytoplasm. Plays a role in the regulation of cell proliferation. An intracellular form suppresses stress-induced apoptosis by stabilizing mitochondrial membrane integrity through interaction with HSPA5. Secreted form does not affect caspase or BAX-mediated intrinsic apoptosis and TNF-induced NF-kappa-B-activity. Secreted form act as an important modulator during neuronal differentiation through interaction with STMN3. Plays a role in the clearance of immune complexes that arise during cell injury. The sequence is that of Clusterin (CLU) from Ovis aries (Sheep).